Consider the following 475-residue polypeptide: Kynureninase (475 aa).

Residues Leu142, Thr143, 170 to 173 (FPSD), Asp255, His258, and Tyr280 contribute to the pyridoxal 5'-phosphate site. The residue at position 281 (Lys281) is an N6-(pyridoxal phosphate)lysine. Pyridoxal 5'-phosphate contacts are provided by Trp320 and Asn348.

It belongs to the kynureninase family. In terms of assembly, homodimer. Pyridoxal 5'-phosphate is required as a cofactor.

The protein localises to the cytoplasm. It carries out the reaction L-kynurenine + H2O = anthranilate + L-alanine + H(+). The enzyme catalyses 3-hydroxy-L-kynurenine + H2O = 3-hydroxyanthranilate + L-alanine + H(+). The protein operates within amino-acid degradation; L-kynurenine degradation; L-alanine and anthranilate from L-kynurenine: step 1/1. It functions in the pathway cofactor biosynthesis; NAD(+) biosynthesis; quinolinate from L-kynurenine: step 2/3. In terms of biological role, catalyzes the cleavage of L-kynurenine (L-Kyn) and L-3-hydroxykynurenine (L-3OHKyn) into anthranilic acid (AA) and 3-hydroxyanthranilic acid (3-OHAA), respectively. This chain is Kynureninase (bna5), found in Botryotinia fuckeliana (strain B05.10) (Noble rot fungus).